A 416-amino-acid polypeptide reads, in one-letter code: Transcription factor LATE FLOWERING (416 aa).

Composition is skewed to low complexity over residues 176–186 (STTTTTTALPP) and 200–212 (TSPT…TSET). Disordered stretches follow at residues 176-226 (STTT…AGGS) and 276-311 (LGGP…QTVA). A basic motif; degenerate region spans residues 303 to 316 (ISSDPQTVAARLRR). In terms of domain architecture, bHLH spans 303–352 (ISSDPQTVAARLRRERVSERLRVLQRLVPGGSKMDTATMLDEAASYLKFL). The interval 317–352 (ERVSERLRVLQRLVPGGSKMDTATMLDEAASYLKFL) is helix-loop-helix motif.

The protein belongs to the bHLH protein family. As to quaternary structure, interacts with PIL13 and PIL15.

The protein localises to the nucleus. In terms of biological role, transcription factor involved in the negative regulation of flowering. May be involved in the repression of the flowering factor GI and HD1 by interacting with PIL13 and PIL15 and competing with PRR1. Possesses transactivation activity in yeast. The polypeptide is Transcription factor LATE FLOWERING (Oryza sativa subsp. japonica (Rice)).